A 636-amino-acid polypeptide reads, in one-letter code: PTS system beta-glucoside-specific EIIBCA component (636 aa).

The 86-residue stretch at 1–86 (MKYEQLAKDI…VEIGGFQNQA (86 aa)) folds into the PTS EIIB type-1 domain. C26 acts as the Phosphocysteine intermediate; for EIIB activity in catalysis. The next 10 helical transmembrane spans lie at 104–124 (IDII…TGMI), 146–166 (LLHA…GYTA), 172–192 (ATPF…LVVL), 215–235 (FLGI…IILA), 258–278 (LVPF…IGPI), 299–319 (IIAG…GLHW), 337–357 (VLAM…AVWL), 369–389 (VPAF…GVTL), 407–427 (AIIG…IFGI), and 444–464 (IVIA…LFGL). The 372-residue stretch at 105–476 (DIIASIFTPV…GNASDEQTET (372 aa)) folds into the PTS EIIC type-1 domain. Residues 472–492 (EQTETKAHTSTGTGEKEEISS) are disordered. Residues 506-610 (DEAFSSGALG…AVTTPVIVTN (105 aa)) form the PTS EIIA type-1 domain. H558 acts as the Tele-phosphohistidine intermediate; for EIIA activity in catalysis.

It is found in the cell membrane. In terms of biological role, the phosphoenolpyruvate-dependent sugar phosphotransferase system (sugar PTS), a major carbohydrate active -transport system, catalyzes the phosphorylation of incoming sugar substrates concomitantly with their translocation across the cell membrane. This system is involved in beta-glucoside transport. The chain is PTS system beta-glucoside-specific EIIBCA component (bglP) from Halalkalibacterium halodurans (strain ATCC BAA-125 / DSM 18197 / FERM 7344 / JCM 9153 / C-125) (Bacillus halodurans).